The sequence spans 518 residues: Arginyl-tRNA--protein transferase 1 (518 aa).

Ser169 is subject to Phosphoserine. The interval 175 to 203 is disordered; sequence EKLGSGEPSHSVKVHTVPKPGKGADLSKP.

This sequence belongs to the R-transferase family. Monomer. Interacts with LIAT1; LIAT1 is not a substrate of ATE1, the interaction takes place in the cytoplasm and seems to increase ATE1 arginyltransferase activity.

The protein resides in the nucleus. It is found in the cytoplasm. The enzyme catalyses an N-terminal L-alpha-aminoacyl-[protein] + L-arginyl-tRNA(Arg) = an N-terminal L-arginyl-L-aminoacyl-[protein] + tRNA(Arg) + H(+). Involved in the post-translational conjugation of arginine to the N-terminal aspartate or glutamate of a protein. This arginylation is required for degradation of the protein via the ubiquitin pathway. Does not arginylate cysteine residues. In Homo sapiens (Human), this protein is Arginyl-tRNA--protein transferase 1.